A 396-amino-acid chain; its full sequence is Elongation factor Tu (396 aa).

The tr-type G domain maps to 10-205; the sequence is KPHVNIGTIG…AVDSYIPTPE (196 aa). Residues 19 to 26 form a G1 region; that stretch reads GHVDHGKT. Residue 19 to 26 participates in GTP binding; that stretch reads GHVDHGKT. Mg(2+) is bound at residue Thr-26. The segment at 60 to 64 is G2; sequence GITIN. The G3 stretch occupies residues 81–84; the sequence is DCPG. GTP-binding positions include 81 to 85 and 136 to 139; these read DCPGH and NKCD. Positions 136–139 are G4; sequence NKCD. Residues 174–176 form a G5 region; the sequence is SAK.

Belongs to the TRAFAC class translation factor GTPase superfamily. Classic translation factor GTPase family. EF-Tu/EF-1A subfamily. As to quaternary structure, monomer.

The protein resides in the cytoplasm. The catalysed reaction is GTP + H2O = GDP + phosphate + H(+). Functionally, GTP hydrolase that promotes the GTP-dependent binding of aminoacyl-tRNA to the A-site of ribosomes during protein biosynthesis. In Brevibacillus brevis (strain 47 / JCM 6285 / NBRC 100599), this protein is Elongation factor Tu.